A 196-amino-acid chain; its full sequence is Phosphoheptose isomerase (196 aa).

An SIS domain is found at 36–196 (MAQALQAEGK…LIDQHLFGGA (161 aa)). A substrate-binding site is contributed by 51 to 53 (NGG). Residues His60 and Glu64 each contribute to the Zn(2+) site. Residues Glu64, 93–94 (ND), 119–121 (STS), Ser124, and Gln174 contribute to the substrate site. The Zn(2+) site is built by Gln174 and His182.

The protein belongs to the SIS family. GmhA subfamily. As to quaternary structure, homotetramer. Requires Zn(2+) as cofactor.

The protein localises to the cytoplasm. It catalyses the reaction 2 D-sedoheptulose 7-phosphate = D-glycero-alpha-D-manno-heptose 7-phosphate + D-glycero-beta-D-manno-heptose 7-phosphate. The protein operates within carbohydrate biosynthesis; D-glycero-D-manno-heptose 7-phosphate biosynthesis; D-glycero-alpha-D-manno-heptose 7-phosphate and D-glycero-beta-D-manno-heptose 7-phosphate from sedoheptulose 7-phosphate: step 1/1. Catalyzes the isomerization of sedoheptulose 7-phosphate in D-glycero-D-manno-heptose 7-phosphate. This Alkalilimnicola ehrlichii (strain ATCC BAA-1101 / DSM 17681 / MLHE-1) protein is Phosphoheptose isomerase.